Reading from the N-terminus, the 419-residue chain is UDP-N-acetylglucosamine 1-carboxyvinyltransferase 2 (419 aa).

24–25 serves as a coordination point for phosphoenolpyruvate; that stretch reads KN. A UDP-N-acetyl-alpha-D-glucosamine-binding site is contributed by Arg-94. Residue Cys-118 is the Proton donor of the active site. 2-(S-cysteinyl)pyruvic acid O-phosphothioketal is present on Cys-118. Residues 123-127, Asp-307, and Ile-329 each bind UDP-N-acetyl-alpha-D-glucosamine; that span reads RPIDQ.

It belongs to the EPSP synthase family. MurA subfamily.

Its subcellular location is the cytoplasm. It carries out the reaction phosphoenolpyruvate + UDP-N-acetyl-alpha-D-glucosamine = UDP-N-acetyl-3-O-(1-carboxyvinyl)-alpha-D-glucosamine + phosphate. The protein operates within cell wall biogenesis; peptidoglycan biosynthesis. In terms of biological role, cell wall formation. Adds enolpyruvyl to UDP-N-acetylglucosamine. This chain is UDP-N-acetylglucosamine 1-carboxyvinyltransferase 2, found in Staphylococcus aureus (strain MRSA252).